The sequence spans 536 residues: DEAD-box ATP-dependent RNA helicase 41 (536 aa).

Basic and acidic residues predominate over residues 1-10 (MEQEENHSAD). Residues 1–25 (MEQEENHSADHLSAQPGNGNELEES) are disordered. The segment at 40–69 (GEPRCVICGRYGEYICDQTDDDICSVECKT) adopts an HIT-type zinc-finger fold. The Q motif signature appears at 137–165 (MCFSSSGLPEKLVLNLEAAGYVMPTPVQM). Residues 168-344 (IPSSICNRSL…NSLAKNAIHI (177 aa)) form the Helicase ATP-binding domain. 181–188 (ADTGSGKT) contacts ATP. The DEAD box motif lies at 293–296 (DEVD). Residues 355–518 (SVKQVVIWVE…PIPRELANSK (164 aa)) enclose the Helicase C-terminal domain.

Belongs to the DEAD box helicase family. DDX59 subfamily.

It catalyses the reaction ATP + H2O = ADP + phosphate + H(+). In Oryza sativa subsp. japonica (Rice), this protein is DEAD-box ATP-dependent RNA helicase 41.